Consider the following 129-residue polypeptide: Small ribosomal subunit protein uS11 (129 aa).

Belongs to the universal ribosomal protein uS11 family. As to quaternary structure, part of the 30S ribosomal subunit. Interacts with proteins S7 and S18. Binds to IF-3.

In terms of biological role, located on the platform of the 30S subunit, it bridges several disparate RNA helices of the 16S rRNA. Forms part of the Shine-Dalgarno cleft in the 70S ribosome. This chain is Small ribosomal subunit protein uS11, found in Hamiltonella defensa subsp. Acyrthosiphon pisum (strain 5AT).